Consider the following 445-residue polypeptide: 6-phosphogluconate dehydrogenase, decarboxylating (445 aa).

NADP(+) contacts are provided by residues 1–4, 22–24, 63–65, and Asn-91; these read AVMG, NRS, and VKA. Residues Asn-91 and 117–119 contribute to the substrate site; that span reads SGG. The active-site Proton acceptor is Lys-172. Residue 175–176 coordinates substrate; that stretch reads HN. The active-site Proton donor is Glu-179. Residues Tyr-180, Lys-249, Arg-276, Arg-434, and His-440 each coordinate substrate.

It belongs to the 6-phosphogluconate dehydrogenase family. As to quaternary structure, homodimer.

The catalysed reaction is 6-phospho-D-gluconate + NADP(+) = D-ribulose 5-phosphate + CO2 + NADPH. The protein operates within carbohydrate degradation; pentose phosphate pathway; D-ribulose 5-phosphate from D-glucose 6-phosphate (oxidative stage): step 3/3. Its function is as follows. Catalyzes the oxidative decarboxylation of 6-phosphogluconate to ribulose 5-phosphate and CO(2), with concomitant reduction of NADP to NADPH. This chain is 6-phosphogluconate dehydrogenase, decarboxylating (gnd), found in Raoultella terrigena (Klebsiella terrigena).